We begin with the raw amino-acid sequence, 529 residues long: O-acetylstemmadenine oxidase (529 aa).

The first 23 residues, 1–23 (MIKKVPIVLSIFCFLLLLSSSHG), serve as a signal peptide directing secretion. The cysteines at positions 32 and 92 are disulfide-linked. N-linked (GlcNAc...) asparagine glycosylation occurs at Asn52. In terms of domain architecture, FAD-binding PCMH-type spans 70–244 (KSPKPLAIIT…VSWKVKLVKV (175 aa)). Residues 102 to 108 (IRSGGAD), Ser113, 168 to 169 (VS), 173 to 177 (GIGGH), and Phe183 contribute to the FAD site. A glycan (N-linked (GlcNAc...) asparagine) is linked at Asn293. FAD is bound at residue Trp465.

It belongs to the oxygen-dependent FAD-linked oxidoreductase family. It depends on FAD as a cofactor. As to expression, expressed in leaf epidermis.

It is found in the endoplasmic reticulum. The protein resides in the vacuole. Its subcellular location is the vesicle. It carries out the reaction O-acetyl-15alpha-stemmadenine + O2 = precondylocarpine acetate + H2O2. The protein operates within alkaloid biosynthesis. Functionally, component of the seco-iridoid and derivatives monoterpenoid indole alkaloids (MIAs, e.g. vinblastine, catharanthine, tabersonine, vincadifformine, vindoline, vincristine, quinine and strychnine) biosynthesis pathway. Converts O-acetylstemmadenine (OAS) to reactive acetylated intermediates, likely dihydroprecondylocarpine acetate. The polypeptide is O-acetylstemmadenine oxidase (Catharanthus roseus (Madagascar periwinkle)).